The following is a 540-amino-acid chain: H(+)/hexose cotransporter 2 (540 aa).

The Cytoplasmic segment spans residues 1 to 29 (MAGGGPVASTTTNRASQYGYARGGLNWYI). Residues 30 to 50 (FIVALTAGSGGLLFGYDIGVT) traverse the membrane as a helical segment. At 51–90 (GGVTSMPEFLQKFFPSIYDRTQQPSDSKDPYCTYDDQKLQ) the chain is on the extracellular side. Residues 91–111 (LFTSSFFLAGMFVSFFAGSVV) traverse the membrane as a helical segment. Residues 112 to 124 (RRWGRKPTMLIAS) lie on the Cytoplasmic side of the membrane. The chain crosses the membrane as a helical span at residues 125–135 (VLFLAGAGLNA). At 136–147 (GAQDLAMLVIGR) the chain is on the extracellular side. Residues 148 to 168 (VLLGFGVGGGNNAVPLYLSEC) form a helical membrane-spanning segment. Residues 169-176 (APPKYRGG) are Cytoplasmic-facing. The helical transmembrane segment at 177–197 (LNMMFQLAVTIGIIVAQLVNY) threads the bilayer. Residues 198 to 207 (GTQTMNNGWR) lie on the Extracellular side of the membrane. A helical membrane pass occupies residues 208-228 (LSLGLAGVPAIILLIGSLLLP). Over 229-296 (ETPNSLIERG…YSPMLIVTSL (68 aa)) the chain is Cytoplasmic. Residues 297–317 (IAMLQQLTGINAIMFYVPVLF) traverse the membrane as a helical segment. Topologically, residues 318 to 326 (SSFGTARHA) are extracellular. A helical membrane pass occupies residues 327–337 (ALLNTVIIGAV). Residues 338–355 (NVAATFVSIFSVDKFGRR) lie on the Cytoplasmic side of the membrane. Residues 356 to 376 (GLFLEGGIQMFIGQVVTAAVL) traverse the membrane as a helical segment. Residues 377–396 (GVELNKYGTNLPSSTAAGVL) lie on the Extracellular side of the membrane. The chain crosses the membrane as a helical span at residues 397 to 417 (VVICVYVAAFAWSWGPLGWLV). Residues 418 to 435 (PSEIQTLETRGAGMSMAV) lie on the Cytoplasmic side of the membrane. Residues 436-456 (IVNFLFSFVIGQAFLSMMCAM) form a helical membrane-spanning segment. Residues 457–458 (RW) lie on the Extracellular side of the membrane. The helical transmembrane segment at 459-479 (GVFLFFAGWVVIMTFFVYFCL) threads the bilayer. The Cytoplasmic portion of the chain corresponds to 480–540 (PETKGVPVET…SEDGKPASDQ (61 aa)).

This sequence belongs to the major facilitator superfamily. Sugar transporter (TC 2.A.1.1) family.

Its subcellular location is the membrane. Functionally, active uptake of galactose. This chain is H(+)/hexose cotransporter 2 (HUP2), found in Parachlorella kessleri (Green alga).